Reading from the N-terminus, the 508-residue chain is Probable ligand-gated ion channel 46 (508 aa).

Positions 1–18 (MQYLQFLSLVVLLLMCHA) are cleaved as a signal peptide. Residues 19–274 (RKSVYRRNSP…FEFKRRAGWY (256 aa)) are Extracellular-facing. 4 N-linked (GlcNAc...) asparagine glycosylation sites follow: Asn65, Asn134, Asn175, and Asn201. Cysteines 190 and 204 form a disulfide. A helical transmembrane segment spans residues 275–295 (ILQAYLPTYLTICISWISFAL). Over 296-301 (GSKAIP) the chain is Cytoplasmic. Residues 302-321 (ARTMLGVNSLLAMTFQFGNI) traverse the membrane as a helical segment. Residues 322-335 (IRNLPRVSYVKAID) lie on the Extracellular side of the membrane. Residues 336–356 (VWMLSCMTFVFCSLLELAWVG) form a helical membrane-spanning segment. Over 357 to 480 (YLSREEEPTS…KQRREILAHK (124 aa)) the chain is Cytoplasmic. Residues 374–407 (AQVAPKPCHPPPVQQNANNSSVHRRQKQPKNEEE) are disordered. The helical transmembrane segment at 481 to 501 (IDSVSVFMFPFLFVLFNIAYW) threads the bilayer. The Extracellular portion of the chain corresponds to 502 to 508 (QHYLRGY).

It belongs to the ligand-gated ion channel (TC 1.A.9) family. In terms of tissue distribution, expressed in the nervous system, with high expression in cholinergic motor neurons and weak expression in GABAergic motor neurons.

It is found in the presynaptic cell membrane. It localises to the cell projection. Its subcellular location is the axon. The protein localises to the cytoplasmic vesicle. The protein resides in the secretory vesicle. It is found in the synaptic vesicle. Probable component of a ligand-gated anion channel. Negatively regulates synaptic transmission and synaptic vesicle release in response to acetylcholine in cholinergic motor neurons. Role in synaptic vesicle release kinetics may be in association with the ligand-gated ion channel protein acc-4. This is Probable ligand-gated ion channel 46 from Caenorhabditis elegans.